The following is a 224-amino-acid chain: UPF0173 metal-dependent hydrolase TK0141 (224 aa).

The protein belongs to the UPF0173 family.

This Thermococcus kodakarensis (strain ATCC BAA-918 / JCM 12380 / KOD1) (Pyrococcus kodakaraensis (strain KOD1)) protein is UPF0173 metal-dependent hydrolase TK0141.